We begin with the raw amino-acid sequence, 165 residues long: Probable DNA polymerase III subunit chi (165 aa).

This sequence belongs to the DNA polymerase III chi/HolC chain family. As to quaternary structure, DNA polymerase III contains a core (composed of alpha, epsilon and theta chains) that associates with a tau subunit. This core dimerizes to form the POLIII' complex. PolIII' associates with the gamma complex (composed of gamma, delta, delta', psi and chi chains) and with the beta chain to form the complete DNA polymerase III complex. Interacts directly with the psi subunit (holD). The only subunit of the DNA polymerase III holoenzyme known to interact with single-stranded DNA binding protein (SSB).

It carries out the reaction DNA(n) + a 2'-deoxyribonucleoside 5'-triphosphate = DNA(n+1) + diphosphate. Functionally, part of the beta sliding clamp loading complex, which hydrolyzes ATP to load the beta clamp onto primed DNA to form the DNA replication pre-initiation complex. DNA polymerase III is a complex, multichain enzyme responsible for most of the replicative synthesis in bacteria. This DNA polymerase also exhibits 3' to 5' exonuclease activity. The polypeptide is Probable DNA polymerase III subunit chi (Rickettsia prowazekii (strain Madrid E)).